We begin with the raw amino-acid sequence, 449 residues long: Naphthalene 1,2-dioxygenase system, large oxygenase component (449 aa).

The Rieske domain maps to tryptophan 39–glutamate 137. Positions 81, 83, 101, and 104 each coordinate [2Fe-2S] cluster. The Fe cation site is built by histidine 208, histidine 213, and aspartate 362.

It belongs to the bacterial ring-hydroxylating dioxygenase alpha subunit family. The naphthalene dioxygenase (NDO) multicomponent enzyme system is composed of an electron transfer component and a dioxygenase component (iron sulfur protein (ISP)). The electron transfer component is composed of a ferredoxin reductase (NdoR) and a ferredoxin (NdoA), and the dioxygenase component is formed of a heterohexamer (trimer of heterodimers) of three large alpha subunits (NdoB) and three small beta subunits (NdoC). It depends on [2Fe-2S] cluster as a cofactor. Fe(2+) serves as cofactor.

The catalysed reaction is naphthalene + NADH + O2 + H(+) = (1R,2S)-1,2-dihydronaphthalene-1,2-diol + NAD(+). It functions in the pathway aromatic compound metabolism; naphthalene degradation. Its function is as follows. Component of the naphthalene dioxygenase (NDO) multicomponent enzyme system which catalyzes the incorporation of both atoms of molecular oxygen into naphthalene to form cis-(1R,2S)-dihydroxy-1,2-dihydronaphthalene. The alpha subunit has a catalytic role in the holoenzyme. This chain is Naphthalene 1,2-dioxygenase system, large oxygenase component, found in Pseudomonas fluorescens.